A 306-amino-acid chain; its full sequence is UDP-N-acetylenolpyruvoylglucosamine reductase (306 aa).

Residues 34 to 198 (VGGPADLLIT…LEVTFKLHNS (165 aa)) form the FAD-binding PCMH-type domain. Residue Arg-177 is part of the active site. The active-site Proton donor is Ser-227. Residue Glu-297 is part of the active site.

The protein belongs to the MurB family. FAD serves as cofactor.

It localises to the cytoplasm. The catalysed reaction is UDP-N-acetyl-alpha-D-muramate + NADP(+) = UDP-N-acetyl-3-O-(1-carboxyvinyl)-alpha-D-glucosamine + NADPH + H(+). It participates in cell wall biogenesis; peptidoglycan biosynthesis. In terms of biological role, cell wall formation. The chain is UDP-N-acetylenolpyruvoylglucosamine reductase from Clostridium botulinum (strain ATCC 19397 / Type A).